We begin with the raw amino-acid sequence, 367 residues long: Glutamate 5-kinase (367 aa).

Lys10 provides a ligand contact to ATP. Positions 50, 137, and 149 each coordinate substrate. ATP is bound by residues 169-170 and 211-217; these read TD and TGGMSTK. The region spanning 275 to 353 is the PUA domain; sequence AGEITVDEGA…QQIDAILGYE (79 aa).

It belongs to the glutamate 5-kinase family.

The protein resides in the cytoplasm. The catalysed reaction is L-glutamate + ATP = L-glutamyl 5-phosphate + ADP. It participates in amino-acid biosynthesis; L-proline biosynthesis; L-glutamate 5-semialdehyde from L-glutamate: step 1/2. In terms of biological role, catalyzes the transfer of a phosphate group to glutamate to form L-glutamate 5-phosphate. This Salmonella arizonae (strain ATCC BAA-731 / CDC346-86 / RSK2980) protein is Glutamate 5-kinase.